The sequence spans 323 residues: Methenyltetrahydromethanopterin cyclohydrolase (323 aa).

Belongs to the MCH family.

The protein resides in the cytoplasm. The catalysed reaction is 5,10-methenyl-5,6,7,8-tetrahydromethanopterin + H2O = N(5)-formyl-5,6,7,8-tetrahydromethanopterin + H(+). Its pathway is one-carbon metabolism; methanogenesis from CO(2); 5,10-methenyl-5,6,7,8-tetrahydromethanopterin from CO(2): step 3/3. Functionally, catalyzes the reversible interconversion of 5-formyl-H(4)MPT to methenyl-H(4)MPT(+). This is Methenyltetrahydromethanopterin cyclohydrolase from Methanococcus maripaludis (strain DSM 14266 / JCM 13030 / NBRC 101832 / S2 / LL).